A 415-amino-acid polypeptide reads, in one-letter code: Intron-encoded DNA endonuclease aI3 (415 aa).

The COX1 exons 1 to 3 encoded stretch occupies residues 1-81; the sequence is MVQRWLYSTN…MPALIGGFGN (81 aa). Transmembrane regions (helical) follow at residues 16-36 and 57-77; these read VLYF…SLII and VLVV…ALIG. The tract at residues 82-415 is COX1 intron 3 encoded; the sequence is QKRYESNNNN…HLKNTYLENK (334 aa).

This sequence in the C-terminal section; belongs to the LAGLIDADG endonuclease family. Mg(2+) is required as a cofactor. The mature protein may arise from proteolytic cleavage of an in-frame translation of some COX1 exons plus the intron containing the aI3 open reading frame.

The protein localises to the mitochondrion. The protein resides in the membrane. Functionally, mitochondrial DNA endonuclease involved in intron homing. It introduces a specific double-strand break in the DNA of the COX1 gene and thus mediates the insertion of an intron, containing its own coding sequence (group I intron), into an intronless gene. Recognizes with high specificity and cleaves the sequence 5'-GGTTTTGGTAACTATTTATTAC-3'. The sequence is that of Intron-encoded DNA endonuclease aI3 (AI3) from Saccharomyces cerevisiae (strain ATCC 204508 / S288c) (Baker's yeast).